The chain runs to 180 residues: Endoribonuclease YbeY (180 aa).

Positions 149, 153, and 159 each coordinate Zn(2+).

Belongs to the endoribonuclease YbeY family. Requires Zn(2+) as cofactor.

It localises to the cytoplasm. In terms of biological role, single strand-specific metallo-endoribonuclease involved in late-stage 70S ribosome quality control and in maturation of the 3' terminus of the 16S rRNA. The sequence is that of Endoribonuclease YbeY from Prochlorococcus marinus (strain MIT 9515).